Reading from the N-terminus, the 122-residue chain is Proteasome assembly chaperone 3 (122 aa).

Position 1 is an N-acetylmethionine (Met-1).

Belongs to the PSMG3 family. In terms of assembly, homodimer. Interacts directly with alpha and beta subunits of the 20S proteasome but dissociates before the formation of half-proteasomes, probably upon recruitment of POMP. Interacts with PSMG4.

In terms of biological role, chaperone protein which promotes assembly of the 20S proteasome. May cooperate with PSMG1-PSMG2 heterodimers to orchestrate the correct assembly of proteasomes. The chain is Proteasome assembly chaperone 3 (Psmg3) from Mus musculus (Mouse).